The following is a 284-amino-acid chain: Pantothenate synthetase (284 aa).

ATP is bound at residue 30–37 (MGYLHEGH). Histidine 37 (proton donor) is an active-site residue. Glutamine 61 is a binding site for (R)-pantoate. Glutamine 61 contributes to the beta-alanine binding site. Position 147–150 (147–150 (GQKD)) interacts with ATP. Glutamine 153 lines the (R)-pantoate pocket. ATP is bound by residues valine 176 and 184–187 (KSSR).

This sequence belongs to the pantothenate synthetase family. In terms of assembly, homodimer.

It localises to the cytoplasm. It carries out the reaction (R)-pantoate + beta-alanine + ATP = (R)-pantothenate + AMP + diphosphate + H(+). The protein operates within cofactor biosynthesis; (R)-pantothenate biosynthesis; (R)-pantothenate from (R)-pantoate and beta-alanine: step 1/1. Functionally, catalyzes the condensation of pantoate with beta-alanine in an ATP-dependent reaction via a pantoyl-adenylate intermediate. This Lysinibacillus sphaericus (strain C3-41) protein is Pantothenate synthetase.